The sequence spans 359 residues: Tropomodulin-1 (359 aa).

Residues 36–61 form a disordered region; the sequence is ELDPDNALLPAGLRQKDQTTKAPTGP. Residues 39–138 are tropomyosin-binding; sequence PDNALLPAGL…CDIAAILGMH (100 aa).

It belongs to the tropomodulin family. As to quaternary structure, binds to the N-terminus of tropomyosin and to actin. Interacts with FLII.

The protein localises to the cytoplasm. The protein resides in the cytoskeleton. Blocks the elongation and depolymerization of the actin filaments at the pointed end. The Tmod/TM complex contributes to the formation of the short actin protofilament, which in turn defines the geometry of the membrane skeleton. This chain is Tropomodulin-1 (Tmod1), found in Rattus norvegicus (Rat).